Here is a 339-residue protein sequence, read N- to C-terminus: Aspartate carbamoyltransferase catalytic subunit (339 aa).

Positions 59 and 60 each coordinate carbamoyl phosphate. L-aspartate is bound at residue lysine 87. Residues arginine 109, histidine 142, and glutamine 145 each coordinate carbamoyl phosphate. The L-aspartate site is built by arginine 182 and arginine 253. Residues glycine 294 and proline 295 each coordinate carbamoyl phosphate.

The protein belongs to the aspartate/ornithine carbamoyltransferase superfamily. ATCase family. Heterododecamer (2C3:3R2) of six catalytic PyrB chains organized as two trimers (C3), and six regulatory PyrI chains organized as three dimers (R2).

It carries out the reaction carbamoyl phosphate + L-aspartate = N-carbamoyl-L-aspartate + phosphate + H(+). The protein operates within pyrimidine metabolism; UMP biosynthesis via de novo pathway; (S)-dihydroorotate from bicarbonate: step 2/3. Its function is as follows. Catalyzes the condensation of carbamoyl phosphate and aspartate to form carbamoyl aspartate and inorganic phosphate, the committed step in the de novo pyrimidine nucleotide biosynthesis pathway. This is Aspartate carbamoyltransferase catalytic subunit from Prochlorococcus marinus (strain NATL1A).